A 1373-amino-acid chain; its full sequence is Disease resistance protein RRS1 (1373 aa).

Positions 5–146 constitute a TIR domain; that stretch reads EKDEEFVCIS…EIVRDVYETH (142 aa). In terms of domain architecture, NB-ARC spans 170-421; the sequence is IGIRCVGIWG…LLEGCGFFPH (252 aa). 179 to 186 is a binding site for ATP; it reads GMPGIGKT. 9 LRR repeats span residues 498 to 522, 535 to 553, 554 to 575, 577 to 598, 621 to 646, 665 to 688, 742 to 766, 768 to 793, and 831 to 854; these read SEEI…AFKN, NPEV…HSLP, NELR…NFDP, HLVE…TKNL, AENL…RLLR, PPNI…TVKP, LPNM…SIQG, PRFL…SLEI, and PRNL…PLSL. The Nuclear localization signal motif lies at 988-1005; sequence RNFHCWAPGKVVPKVRKD. A DNA-binding region (WRKY) is located at residues 1204 to 1272; sequence IPAIDEGDLW…YLSEHNHPRP (69 aa). Positions 1300–1323 are disordered; that stretch reads RVFQNKDEPNKPHLPSSSTPPGNA.

As to quaternary structure, interacts with PopP2, a R.solanacearum type III effector.

It localises to the nucleus. Transcription factor. Interacts specifically with the W box (5'-(T)TGAC[CT]-3'), a frequently occurring elicitor-responsive cis-acting element. Also acts as a disease resistance protein involved in resistance to fungal and bacterial pathogens, including R.solanacearum, P.syringae pv. tomato and C.higginsianum. In presence of RPS4, elicites an EDS1-dependent hypersensitive response. The sequence is that of Disease resistance protein RRS1 from Arabidopsis thaliana (Mouse-ear cress).